The sequence spans 261 residues: Cytochrome c oxidase subunit 3 (261 aa).

Residues M1–P15 are Mitochondrial matrix-facing. Residues W16–W34 form a helical membrane-spanning segment. Residues F35–T40 are Mitochondrial intermembrane-facing. A helical transmembrane segment spans residues T41 to T66. Topologically, residues Y67–T72 are mitochondrial matrix. The chain crosses the membrane as a helical span at residues L73–S105. At L106–E128 the chain is on the mitochondrial intermembrane side. Residues V129 to M152 traverse the membrane as a helical segment. The Mitochondrial matrix portion of the chain corresponds to E153–N155. Residues R156–E183 traverse the membrane as a helical segment. The Mitochondrial intermembrane segment spans residues A184 to D190. A helical membrane pass occupies residues G191–L223. Residues L224–H232 are Mitochondrial matrix-facing. Residues F233–I256 form a helical membrane-spanning segment. Topologically, residues Y257–S261 are mitochondrial intermembrane.

It belongs to the cytochrome c oxidase subunit 3 family. In terms of assembly, component of the cytochrome c oxidase (complex IV, CIV), a multisubunit enzyme composed of 14 subunits. The complex is composed of a catalytic core of 3 subunits MT-CO1, MT-CO2 and MT-CO3, encoded in the mitochondrial DNA, and 11 supernumerary subunits COX4I, COX5A, COX5B, COX6A, COX6B, COX6C, COX7A, COX7B, COX7C, COX8 and NDUFA4, which are encoded in the nuclear genome. The complex exists as a monomer or a dimer and forms supercomplexes (SCs) in the inner mitochondrial membrane with NADH-ubiquinone oxidoreductase (complex I, CI) and ubiquinol-cytochrome c oxidoreductase (cytochrome b-c1 complex, complex III, CIII), resulting in different assemblies (supercomplex SCI(1)III(2)IV(1) and megacomplex MCI(2)III(2)IV(2)).

It localises to the mitochondrion inner membrane. It catalyses the reaction 4 Fe(II)-[cytochrome c] + O2 + 8 H(+)(in) = 4 Fe(III)-[cytochrome c] + 2 H2O + 4 H(+)(out). In terms of biological role, component of the cytochrome c oxidase, the last enzyme in the mitochondrial electron transport chain which drives oxidative phosphorylation. The respiratory chain contains 3 multisubunit complexes succinate dehydrogenase (complex II, CII), ubiquinol-cytochrome c oxidoreductase (cytochrome b-c1 complex, complex III, CIII) and cytochrome c oxidase (complex IV, CIV), that cooperate to transfer electrons derived from NADH and succinate to molecular oxygen, creating an electrochemical gradient over the inner membrane that drives transmembrane transport and the ATP synthase. Cytochrome c oxidase is the component of the respiratory chain that catalyzes the reduction of oxygen to water. Electrons originating from reduced cytochrome c in the intermembrane space (IMS) are transferred via the dinuclear copper A center (CU(A)) of subunit 2 and heme A of subunit 1 to the active site in subunit 1, a binuclear center (BNC) formed by heme A3 and copper B (CU(B)). The BNC reduces molecular oxygen to 2 water molecules using 4 electrons from cytochrome c in the IMS and 4 protons from the mitochondrial matrix. The polypeptide is Cytochrome c oxidase subunit 3 (MT-CO3) (Pongo pygmaeus (Bornean orangutan)).